The primary structure comprises 299 residues: Probable lipid kinase YegS-like (299 aa).

One can recognise a DAGKc domain in the interval 2-133; that stretch reads EKNPITLLIL…IDIAKVNDGH (132 aa). Residues Thr40, 66–72, and Thr95 contribute to the ATP site; that span reads GDGTVNE. Mg(2+) contacts are provided by Leu215, Asp218, and Leu220. Glu271 functions as the Proton acceptor in the catalytic mechanism.

This sequence belongs to the diacylglycerol/lipid kinase family. YegS lipid kinase subfamily. Mg(2+) is required as a cofactor. Ca(2+) serves as cofactor.

The protein localises to the cytoplasm. In terms of biological role, probably phosphorylates lipids; the in vivo substrate is unknown. The chain is Probable lipid kinase YegS-like from Pectobacterium atrosepticum (strain SCRI 1043 / ATCC BAA-672) (Erwinia carotovora subsp. atroseptica).